A 750-amino-acid polypeptide reads, in one-letter code: MWKLLPAASAAPGEPCRLLAGVEYIVGRKNCAILIENDQSISRNHAVLRVNFPVTSLSQTDEIPTLTIKDNSKYGTFINEEKMQNGLSSTLKTGDRVTFGVFESKFRVEYEPLVVCSSCLDVSGKTVLNQAILQLGGLTANSWTEECTHLAMSSVKVTIKTICALICGRPIVKPEYFSEFLKAVESKTQPPEIESFYPPIDEPAIGNKSVDLSGRRERKQIFKGKTFVFLNAKQHKKLGSAVVFGGGEARLMAEGGEEEQSFFSAPGTCVVDVGITNTQLIITDSQRKWIHLIMDILQRHGLRPIPEAEIGLAVIFMTTESYCNPQGQPCTEVKTTTPGPSLSQGLSANGKVIPSAPMNMTTYVADTESEPADTCMSLSERPEEVKIFGLDQNSRKLLQGTCNIKETSNQSSNSNNAASNTLVRGKAPNYQLSPMKCPAASKNKDWSSQQQLNSIKNYFQPCSRKRERDEENPEQSSCKSSRVELSCSLLEQTQPAGPSLWKSKDHESQSETLDRASNASSVGGIDIKPNGKSPDSKSFSTEDLRARKRKEVDLSTEEEVLEELLRSTKPELAVQVKVEKQEADVSIRKKPRMDAERNQHLNGGPVPESNSALQEDETGKKDELQIEAWSTKREVSNTDELQDSSEELPRKLLLTEFRSLVVHNNSSRNLCVLNGRGELKNFKKFKKATCPGAGKLPHIIGGSDLIGHHARKNTELEEWLKHEMEVQKQQAKEDSLADDLFRYNPNVKRR.

The FHA domain maps to 24-83 (YIVGRKNCAILIENDQSISRNHAVLRVNFPVTSLSQTDEIPTLTIKDNSKYGTFINEEKM). 2 consecutive BRCT domains span residues 105–181 (KFRV…SEFL) and 224–315 (GKTF…LAVI). Residues 111–328 (EPLVVCSSCL…TESYCNPQGQ (218 aa)) form a mediates interaction with SP100 region. Residues 221–403 (IFKGKTFVFL…SRKLLQGTCN (183 aa)) are interaction with MTOR, MAPKAP1 and RICTOR. At T337 the chain carries Phosphothreonine. Phosphoserine; by ATM is present on S343. Residues S347 and S433 each carry the phosphoserine modification. 2 disordered regions span residues 429 to 479 (NYQL…SSCK) and 494 to 550 (QPAG…RKRK). Residue K436 forms a Glycyl lysine isopeptide (Lys-Gly) (interchain with G-Cter in ubiquitin) linkage. Over residues 446–457 (WSSQQQLNSIKN) the composition is skewed to polar residues. A Nuclear localization signal motif is present at residues 461–467 (PCSRKRE). A compositionally biased stretch (basic and acidic residues) spans 502–514 (KSKDHESQSETLD). Phosphoserine occurs at positions 508 and 517. K528 participates in a covalent cross-link: Glycyl lysine isopeptide (Lys-Gly) (interchain with G-Cter in SUMO2). Over residues 540-550 (STEDLRARKRK) the composition is skewed to basic and acidic residues. Residues K569 and K580 each participate in a glycyl lysine isopeptide (Lys-Gly) (interchain with G-Cter in SUMO2) cross-link. The segment covering 581-599 (QEADVSIRKKPRMDAERNQ) has biased composition (basic and acidic residues). Residues 581 to 622 (QEADVSIRKKPRMDAERNQHLNGGPVPESNSALQEDETGKKD) form a disordered region. Glycyl lysine isopeptide (Lys-Gly) (interchain with G-Cter in ubiquitin) cross-links involve residues K683, K687, and K732. Positions 737-746 (ADDLFRYNPN) match the FxF/Y motif motif.

Belongs to the Nibrin family. In terms of assembly, component of the MRN complex composed of two heterodimers RAD50 and MRE11 associated with a single NBN. The MRN complexes dimerize on DNA to form joined MRN-MRN oligomers required for DNA double-strand break repair. The MRN complexes dimerize on DNA to form joined MRN-MRN oligomers required for DNA double-strand break repair. As part of the MRN complex, interacts with MCM9; the interaction recruits the complex to DNA repair sites. Component of the BASC complex, at least composed of BRCA1, MSH2, MSH6, MLH1, ATM, BLM, RAD50, MRE11 and NBN. Interacts with histone H2AX; this requires phosphorylation of H2AX on 'Ser-139' and promotes NBN recruitment to DNA damage sites. Interacts with (phosphorylated) MDC1; promoting NBN recruitment to DNA damage sites. Interacts with (phosphorylated) RAD17; promoting NBN recruitment to DNA damage sites. Interacts (via FxF/Y motif) with ATM. Interacts with HJURP. Interacts with INTS3. Interacts with KPNA2. Interacts with TERF2; interaction is disrupted upon NBN phosphorylation by CDK2. Interacts with (phosphorylated) RBBP8/CtIP; the interaction links the role of the MRN complex in DNA double-strand break sensing to resection. Interacts with SP100; recruits NBN to PML bodies. Interacts with ATF2. Interacts with MTOR, MAPKAP1 isoform 2 and RICTOR; indicative for an association with the mTORC2 complex. Interacts with MRNIP. Interacts with UFL1; promoting UFL1 recruitment to double-strand breaks following DNA damage. Interacts with CYREN (via XLF motif). Phosphorylated by ATM in response of ionizing radiation, and such phosphorylation is responsible intra-S phase checkpoint control and telomere maintenance. Phosphorylated at Ser-433 by CDK2 in S/G2 phases abolishes interaction with TERF2, enabling DCLRE1B/Apollo recruitment to telomeres. Phosphorylation at Ser-433 in response to dysfunctional telomeres promotes non-homologous end joining repair at telomeres, while dephosphorylation by PPP1CA promotes microhomology-mediated end-joining (MMEJ) repair. In terms of processing, ubiquitinated at Lys-436 via 'Lys-6'-linked ubiquitin chains by RNF8, promoting NBN recruitment to DNA double-strand breaks (DSBs). Ubiquitinated at Lys-687 via 'Lys-63'-linked ubiquitin chains by PELI1: ubiquitination takes place following PELI1 phosphorylation and promotes ATM activation and DNA repair. Ubiquitinated at Lys-732 via 'Lys-63'-linked ubiquitin chains by the SCF(SKP2) complex: ubiquitination takes place following SKP2 phosphorylation and promotes ATM activation and DNA repair. As to expression, present at approximately equal levels in the heart at fetal day 17, at relatively constant levels at postnatal days 10, 17 and 21 and at slightly lower levels in the adult heart. Barely detectable in the brain. Not detected in kidney, very low levels in liver and skeletal muscle and moderate levels in heart, lung and brain (at protein level).

It localises to the nucleus. Its subcellular location is the chromosome. The protein resides in the PML body. It is found in the telomere. Its function is as follows. Component of the MRN complex, which plays a central role in double-strand break (DSB) repair, DNA recombination, maintenance of telomere integrity and meiosis. The MRN complex is involved in the repair of DNA double-strand breaks (DSBs) via homologous recombination (HR), an error-free mechanism which primarily occurs during S and G2 phases. The complex (1) mediates the end resection of damaged DNA, which generates proper single-stranded DNA, a key initial steps in HR, and is (2) required for the recruitment of other repair factors and efficient activation of ATM and ATR upon DNA damage. The MRN complex possesses single-strand endonuclease activity and double-strand-specific 3'-5' exonuclease activity, which are provided by MRE11, to initiate end resection, which is required for single-strand invasion and recombination. Within the MRN complex, NBN acts as a protein-protein adapter, which specifically recognizes and binds phosphorylated proteins, promoting their recruitment to DNA damage sites. Recruits MRE11 and RAD50 components of the MRN complex to DSBs in response to DNA damage. Promotes the recruitment of PI3/PI4-kinase family members ATM, ATR, and probably DNA-PKcs to the DNA damage sites, activating their functions. Mediates the recruitment of phosphorylated RBBP8/CtIP to DSBs, leading to cooperation between the MRN complex and RBBP8/CtIP to initiate end resection. RBBP8/CtIP specifically promotes the endonuclease activity of the MRN complex to clear DNA ends containing protein adducts. The MRN complex is also required for the processing of R-loops. NBN also functions in telomere length maintenance via its interaction with TERF2: interaction with TERF2 during G1 phase preventing recruitment of DCLRE1B/Apollo to telomeres. NBN also promotes DNA repair choice at dysfunctional telomeres: NBN phosphorylation by CK2 promotes non-homologous end joining repair at telomeres, while unphosphorylated NBN promotes microhomology-mediated end-joining (MMEJ) repair. Enhances AKT1 phosphorylation possibly by association with the mTORC2 complex. This chain is Nibrin (Nbn), found in Rattus norvegicus (Rat).